Consider the following 666-residue polypeptide: Pentatricopeptide repeat-containing protein At1g64100 (666 aa).

15 PPR repeats span residues T105–L139, N140–P174, D175–E209, V225–I259, D260–P294, D295–P329, N330–P364, D365–P399, D400–P430, D431–A465, N466–P500, D501–L535, D536–P570, D571–P605, and D606–G640.

It belongs to the PPR family. P subfamily.

In Arabidopsis thaliana (Mouse-ear cress), this protein is Pentatricopeptide repeat-containing protein At1g64100.